The chain runs to 579 residues: YTH domain-containing family protein 2 (579 aa).

The interval 1-45 (MSASSLLEQRPKGQGNKVQNGSVHQKDGLNDDDFEPYLSPQARPN) is disordered. The residue at position 2 (Ser2) is an N-acetylserine. Phosphoserine is present on residues Ser2, Ser4, Ser5, Ser22, Ser39, and Ser196. The localization to mRNA processing bodies (P-bodies) stretch occupies residues 2–384 (SASSLLEQRP…QAGSGSTPSE (383 aa)). Residues 247-387 (AKQQPKLKTK…SGSTPSEPHP (141 aa)) are disordered. Positions 291-316 (ALVQNIGQPTQGSPQPVGQQANNSPP) are enriched in polar residues. Residues 337–349 (AQLSVQQQAAQPT) are compositionally biased toward low complexity. Ser359 carries the phosphoserine modification. Gly residues predominate over residues 359–371 (SGFGHNGVDGNGV). Positions 372-383 (GQSQAGSGSTPS) are enriched in polar residues. Residues 385–579 (PHPVLEKLRS…VKKERQGRGK (195 aa)) are interaction with m6A-containing mRNAs. Ser394 is subject to Phosphoserine. In terms of domain architecture, YTH spans 410–544 (GRVFIIKSYS…EKAKQVLKII (135 aa)). RNA-binding positions include 416–418 (KSY), Asp422, 432–433 (WC), Asn462, Trp486, and Trp491.

Belongs to the YTHDF family. YTHDF2 subfamily. In terms of assembly, interacts with CNOT1; interaction is direct and promotes recruitment of the CCR4-NOT complex. Interacts with YTHDF3. Interacts with RIDA/HRSP12; interaction leads to recruitment of the ribonuclease P/MRP complex. Ubiquitinated by the SCF(SKP2) complex, leading to its degradation. In terms of tissue distribution, highly expressed in induced pluripotent stem cells (iPSCs) and down-regulated during neural differentiation.

The protein localises to the cytoplasm. The protein resides in the cytosol. Its subcellular location is the P-body. It is found in the stress granule. It localises to the nucleus. Its function is as follows. Specifically recognizes and binds N6-methyladenosine (m6A)-containing RNAs, and regulates their stability. M6A is a modification present at internal sites of mRNAs and some non-coding RNAs and plays a role in mRNA stability and processing. Acts as a regulator of mRNA stability by promoting degradation of m6A-containing mRNAs via interaction with the CCR4-NOT and ribonuclease P/MRP complexes, depending on the context. The YTHDF paralogs (YTHDF1, YTHDF2 and YTHDF3) share m6A-containing mRNAs targets and act redundantly to mediate mRNA degradation and cellular differentiation. M6A-containing mRNAs containing a binding site for RIDA/HRSP12 (5'-GGUUC-3') are preferentially degraded by endoribonucleolytic cleavage: cooperative binding of RIDA/HRSP12 and YTHDF2 to transcripts leads to recruitment of the ribonuclease P/MRP complex. Other m6A-containing mRNAs undergo deadenylation via direct interaction between YTHDF2 and CNOT1, leading to recruitment of the CCR4-NOT and subsequent deadenylation of m6A-containing mRNAs. Required maternally to regulate oocyte maturation: probably acts by binding to m6A-containing mRNAs, thereby regulating maternal transcript dosage during oocyte maturation, which is essential for the competence of oocytes to sustain early zygotic development. Also required during spermatogenesis: regulates spermagonial adhesion by promoting degradation of m6A-containing transcripts coding for matrix metallopeptidases. Also involved in hematopoietic stem cells specification by binding to m6A-containing mRNAs, leading to promote their degradation. Also acts as a regulator of neural development by promoting m6A-dependent degradation of neural development-related mRNA targets. Inhibits neural specification of induced pluripotent stem cells by binding to methylated neural-specific mRNAs and promoting their degradation, thereby restraining neural differentiation. Regulates circadian regulation of hepatic lipid metabolism: acts by promoting m6A-dependent degradation of PPARA transcripts. Regulates the innate immune response to infection by inhibiting the type I interferon response: acts by binding to m6A-containing IFNB transcripts and promoting their degradation. May also act as a promoter of cap-independent mRNA translation following heat shock stress: upon stress, relocalizes to the nucleus and specifically binds mRNAs with some m6A methylation mark at their 5'-UTR, protecting demethylation of mRNAs by FTO, thereby promoting cap-independent mRNA translation. Regulates mitotic entry by promoting the phase-specific m6A-dependent degradation of WEE1 transcripts. Promotes formation of phase-separated membraneless compartments, such as P-bodies or stress granules, by undergoing liquid-liquid phase separation upon binding to mRNAs containing multiple m6A-modified residues: polymethylated mRNAs act as a multivalent scaffold for the binding of YTHDF proteins, juxtaposing their disordered regions and thereby leading to phase separation. The resulting mRNA-YTHDF complexes then partition into different endogenous phase-separated membraneless compartments, such as P-bodies, stress granules or neuronal RNA granules. May also recognize and bind RNAs modified by C5-methylcytosine (m5C) and act as a regulator of rRNA processing. Functionally, (Microbial infection) Promotes viral gene expression and replication of polyomavirus SV40: acts by binding to N6-methyladenosine (m6A)-containing viral RNAs. In terms of biological role, (Microbial infection) Promotes viral gene expression and virion production of kaposis sarcoma-associated herpesvirus (KSHV) at some stage of the KSHV life cycle (in iSLK.219 and iSLK.BAC16 cells). Acts by binding to N6-methyladenosine (m6A)-containing viral RNAs. This Homo sapiens (Human) protein is YTH domain-containing family protein 2.